A 95-amino-acid polypeptide reads, in one-letter code: MTFRPLHDRVVVKRLESEEKTKGGIIIPDSAKEKPQEGEIIAVGPGGRDESGKLIPLDVKAGDKILFGKWSGTEVKIDGQDLLIMKESDILGVVG.

Belongs to the GroES chaperonin family. In terms of assembly, heptamer of 7 subunits arranged in a ring. Interacts with the chaperonin GroEL.

It localises to the cytoplasm. Together with the chaperonin GroEL, plays an essential role in assisting protein folding. The GroEL-GroES system forms a nano-cage that allows encapsulation of the non-native substrate proteins and provides a physical environment optimized to promote and accelerate protein folding. GroES binds to the apical surface of the GroEL ring, thereby capping the opening of the GroEL channel. This is Co-chaperonin GroES from Beijerinckia indica subsp. indica (strain ATCC 9039 / DSM 1715 / NCIMB 8712).